We begin with the raw amino-acid sequence, 471 residues long: uncharacterized protein (471 aa).

4 consecutive transmembrane segments (helical) span residues 10–30 (ALWL…LFVI), 46–66 (IDDR…WFAI), 87–107 (TLII…LYFS), and 280–300 (IVVG…LYFA).

It belongs to the bacterial sugar transferase family.

It is found in the cell membrane. The protein operates within glycan metabolism; exopolysaccharide biosynthesis. Functionally, may function as a sugar transferase. This is an uncharacterized protein from Haemophilus influenzae (strain ATCC 51907 / DSM 11121 / KW20 / Rd).